The primary structure comprises 298 residues: Protein ILRUN (298 aa).

A disordered region spans residues 199-277 (NTQPHRKVEG…SVNLSPSSHA (79 aa)). Phosphoserine is present on residues Ser-215 and Ser-222. The segment covering 242 to 255 (TWAPAPDTWAPAPD) has biased composition (low complexity). Residues 262–277 (NRLSQNSVNLSPSSHA) show a composition bias toward polar residues. Ser-272 is subject to Phosphoserine.

In terms of assembly, interacts with IRF3; the interaction inhibits IRF3 binding to its DNA consensus sequence. As to expression, expressed in lung (at protein level).

The protein resides in the cytoplasm. It localises to the nucleus. In terms of biological role, negative regulator of innate antiviral response. Blocks IRF3-dependent cytokine production such as IFNA, IFNB and TNF. Interacts with IRF3 and inhibits IRF3 recruitment to type I IFN promoter sequences while also reducing nuclear levels of the coactivators EP300 and CREBBP. The polypeptide is Protein ILRUN (Homo sapiens (Human)).